Consider the following 476-residue polypeptide: Zinc finger protein 563 (476 aa).

A KRAB domain is found at 4 to 96 (VAFEDVAVNF…IRDSIVNNSI (93 aa)). The C2H2-type 1; degenerate zinc-finger motif lies at 101–125 (DPCQSAECEEVIMGHLSLNSHIRVD). Residues 169–191 (YECKECGKTFSSRRNLRRHMVVQ) form a C2H2-type 2; degenerate zinc finger. 10 consecutive C2H2-type zinc fingers follow at residues 197–219 (YKCK…ERTH), 225–247 (YECK…ERMH), 253–275 (YECK…ERTH), 281–303 (YTCK…ETTH), 309–331 (YECK…MKRH), 337–359 (HKCK…ERIH), 365–387 (YECK…MIMH), 393–415 (HKCK…EKSH), 421–443 (YECK…MVMH), and 449–471 (NKCK…EKTH).

It belongs to the krueppel C2H2-type zinc-finger protein family.

It localises to the nucleus. Functionally, may be involved in transcriptional regulation. This is Zinc finger protein 563 (ZNF563) from Homo sapiens (Human).